Here is a 628-residue protein sequence, read N- to C-terminus: Biosynthetic arginine decarboxylase (628 aa).

At Lys-99 the chain carries N6-(pyridoxal phosphate)lysine. Substrate is bound at residue 279 to 289 (VDVGGGLGIDY).

It belongs to the Orn/Lys/Arg decarboxylase class-II family. SpeA subfamily. The cofactor is Mg(2+). Pyridoxal 5'-phosphate serves as cofactor.

It catalyses the reaction L-arginine + H(+) = agmatine + CO2. It functions in the pathway amine and polyamine biosynthesis; agmatine biosynthesis; agmatine from L-arginine: step 1/1. Functionally, catalyzes the biosynthesis of agmatine from arginine. The chain is Biosynthetic arginine decarboxylase from Xylella fastidiosa (strain M23).